The primary structure comprises 373 residues: Arfaptin-1 (373 aa).

Residues 1–47 are disordered; it reads MAQESPKNSAAEIPVTSNGEVDDAHEHGYNRDLKHSLPSGLGLSETQ. Ala-2 is subject to N-acetylalanine. Ser-5 carries the phosphoserine modification. Basic and acidic residues predominate over residues 22–35; that stretch reads DDAHEHGYNRDLKH. Ser-36, Ser-39, Ser-69, Ser-79, and Ser-132 each carry phosphoserine. An AH domain is found at 153–353; it reads TVDLELEAQI…NQKQLELTLK (201 aa). Position 361 is a phosphothreonine (Thr-361).

As to quaternary structure, forms homodimers or heterodimers with ARFIP2. Interacts with non-myristoylated GTP-bound ARF3, but not to GDP-bound ARF3. Interacts with ARF1. Binds with lower affinity to ARF5 and with very little affinity to ARF6. Interacts with ARL1. Interacts with ATG9A. Post-translationally, phosphorylated by PRKD1; phosphorylation delocalizes ARFIP1 from the Golgi and disrupts its ability to inhibit the activity of ADP-ribosylation factor, an important component of the vesicle scission machinery.

The protein resides in the golgi apparatus. Its subcellular location is the trans-Golgi network membrane. In terms of biological role, plays a role in controlling biogenesis of secretory granules at the trans-Golgi network. Mechanistically, binds ARF-GTP at the neck of a growing secretory granule precursor and forms a protective scaffold. Once the granule precursor has been completely loaded, active PRKD1 phosphorylates ARFIP1 and releases it from ARFs. In turn, ARFs induce fission. Through this mechanism, ensures proper secretory granule formation at the Golgi of pancreatic beta cells. The chain is Arfaptin-1 from Mus musculus (Mouse).